A 484-amino-acid chain; its full sequence is Probable sphingolipid transporter spinster homolog 2 (484 aa).

The interval 1–23 (MDVDGEGDRGQNPRIMERDSDSI) is disordered. The chain crosses the membrane as a helical span at residues 38-58 (LLFVFCVVNLINYIDRGAIAS). Asparagine 62 and asparagine 85 each carry an N-linked (GlcNAc...) asparagine glycan. Transmembrane regions (helical) follow at residues 93-113 (VLSS…ASLA), 122-142 (IGVG…SFDF), 147-167 (ICRM…APFI), 181-201 (AVFY…GGVV), 209-229 (AAFW…FVIK), 273-293 (VYVT…AYSY), 311-331 (IFGG…GVIL), 345-362 (LSVS…AFCF), 377-397 (LLVF…VKPS), 405-425 (MSTV…VGVL), and 436-456 (SLVL…GIFL). Serine 466 carries the phosphoserine modification.

Belongs to the major facilitator superfamily. Spinster (TC 2.A.1.49) family.

The protein resides in the late endosome membrane. The protein localises to the lysosome membrane. Functionally, probable sphingolipid transporter that plays a central role in endosomes and/or lysosomes storage. This Arabidopsis thaliana (Mouse-ear cress) protein is Probable sphingolipid transporter spinster homolog 2.